A 609-amino-acid polypeptide reads, in one-letter code: Putative cell agglutination protein pfl4 (609 aa).

Residues 1-21 (MLFLRFFIFTFFTSIFTVVVS) form the signal peptide. Asn75 is a glycosylation site (N-linked (GlcNAc...) asparagine). The interval 75–391 (NHSTIYTTIN…ASTVVVIPTA (317 aa)) is 9 X 36 AA approximate tandem repeats. Tandem repeats lie at residues 77–110 (STIY…EPTA), 111–146 (GTVT…EPLA), 147–182 (GTVT…EPAV), 183–218 (GTVT…EPTA), 219–254 (GTVT…EPAV), 255–290 (GTVT…EPAV), 291–325 (GTVT…QPTG), 326–361 (GTVT…LPGP), and 362–391 (STIY…IPTA). N-linked (GlcNAc...) asparagine glycosylation occurs at Asn161. Residues 427–589 (FTQPAYFGSS…NSYNPTSYAY (163 aa)) enclose the PA14 domain.

The protein belongs to the mam3/map4 family.

Its subcellular location is the cell surface. In terms of biological role, may be involved in agglutination during conjugation or other aspects of colony formation. Induces flocculation when overexpressed. This is Putative cell agglutination protein pfl4 from Schizosaccharomyces pombe (strain 972 / ATCC 24843) (Fission yeast).